A 608-amino-acid chain; its full sequence is Chaperone protein HtpG (608 aa).

Residues 1–332 (MQFQTEVNQL…VEDLPLNVSR (332 aa)) form an a; substrate-binding region. Residues 333-536 (EILQENQILK…KNKPDFAMQQ (204 aa)) are b. Residues 537-608 (LLKQMGQEQN…LTKIINKAFS (72 aa)) form a c region.

This sequence belongs to the heat shock protein 90 family. In terms of assembly, homodimer.

The protein localises to the cytoplasm. Molecular chaperone. Has ATPase activity. This Campylobacter jejuni (strain RM1221) protein is Chaperone protein HtpG.